Consider the following 330-residue polypeptide: D-lactate dehydrogenase (330 aa).

NAD(+)-binding positions include 155 to 156 (RI), Asp-175, 206 to 207 (MP), Asn-212, 233 to 235 (MAR), and Asp-259. Arg-235 is an active-site residue. Glu-264 is a catalytic residue. Residue His-296 is the Proton donor of the active site.

Belongs to the D-isomer specific 2-hydroxyacid dehydrogenase family.

It catalyses the reaction (R)-lactate + NAD(+) = pyruvate + NADH + H(+). The sequence is that of D-lactate dehydrogenase (ldhD) from Streptococcus agalactiae serotype III (strain NEM316).